The following is a 259-amino-acid chain: MASQVRSVKVGNLSSGATEHDIKEFFSFSGEVESIDIQSNEHSAYVTFKETQGAETAVLLSGASIADQSVIIELAPNYSPPAAPHAETQSSGAESVVQKAEDVVSSMLAKGFILGKDAVGKAKAFDEKHGFTSTATAGVASLDQKIGLSQKLTAGTSLVNEKIKAVDQNFQVTERTKSVYAAAEQTVSSAGSAVMKNRYVLTGVSWAAGAFNRVAQAAGEVGQKTKEKVEAEQPSQPAQSQQQLPEGYSPIHSSEYSKN.

In terms of domain architecture, RRM spans R6–N77. Positions G219 to N259 are disordered. Positions E232 to Q243 are enriched in low complexity.

As to quaternary structure, interacts with ACD11, PR1F2 and PR1F3.

Its subcellular location is the cytoplasm. It localises to the membrane. In Arabidopsis thaliana (Mouse-ear cress), this protein is Binding partner of ACD11 1 (BPA1).